A 159-amino-acid polypeptide reads, in one-letter code: NAD(P)H-quinone oxidoreductase subunit J, chloroplastic (159 aa).

It belongs to the complex I 30 kDa subunit family. In terms of assembly, NDH is composed of at least 16 different subunits, 5 of which are encoded in the nucleus.

The protein localises to the plastid. It localises to the chloroplast thylakoid membrane. It carries out the reaction a plastoquinone + NADH + (n+1) H(+)(in) = a plastoquinol + NAD(+) + n H(+)(out). It catalyses the reaction a plastoquinone + NADPH + (n+1) H(+)(in) = a plastoquinol + NADP(+) + n H(+)(out). Its function is as follows. NDH shuttles electrons from NAD(P)H:plastoquinone, via FMN and iron-sulfur (Fe-S) centers, to quinones in the photosynthetic chain and possibly in a chloroplast respiratory chain. The immediate electron acceptor for the enzyme in this species is believed to be plastoquinone. Couples the redox reaction to proton translocation, and thus conserves the redox energy in a proton gradient. The sequence is that of NAD(P)H-quinone oxidoreductase subunit J, chloroplastic from Agrostis stolonifera (Creeping bentgrass).